The primary structure comprises 141 residues: VLSPADKNNVKSAWKAIGSHAGEHGAEALERMFLSFPPTKTYFPHFDLSHGSAQIKTHGKKVADALTNAVNHIDDMPGALSALSDLHAHKLRVDPVNFKLLSHCLLVTLASHHPAEFTPAVHASLDKFFAAVSTVLTSKYR.

One can recognise a Globin domain in the interval 1-141 (VLSPADKNNV…VSTVLTSKYR (141 aa)). An O2-binding site is contributed by histidine 58. Histidine 87 provides a ligand contact to heme b.

Belongs to the globin family. Heterotetramer of two alpha chains and two beta chains. In terms of tissue distribution, red blood cells.

In terms of biological role, involved in oxygen transport from the lung to the various peripheral tissues. The chain is Hemoglobin subunit alpha-2 from Varecia variegata (Black-and-white ruffed lemur).